Reading from the N-terminus, the 660-residue chain is Bifunctional polymyxin resistance protein ArnA (660 aa).

A formyltransferase ArnAFT region spans residues 1 to 304; it reads MKAVVFAYHD…TLGLVAGAII (304 aa). Residue His-104 is the Proton donor; for formyltransferase activity of the active site. (6R)-10-formyltetrahydrofolate-binding positions include Arg-114 and 136–140; that span reads VSRAD. The dehydrogenase ArnADH stretch occupies residues 314 to 660; it reads RRTRVLILGV…KTVELTEPQA (347 aa). Residues Asp-347 and 368-369 each bind NAD(+); that span reads DI. UDP-alpha-D-glucuronate contacts are provided by residues Ala-393, Tyr-398, and 432–433; that span reads TS. Glu-434 acts as the Proton acceptor; for decarboxylase activity in catalysis. Residues Arg-460, Asn-492, 526 to 535, and Tyr-613 each bind UDP-alpha-D-glucuronate; that span reads KLIDGGRQKR. The active-site Proton donor; for decarboxylase activity is the Arg-619.

It in the N-terminal section; belongs to the Fmt family. UDP-L-Ara4N formyltransferase subfamily. In the C-terminal section; belongs to the NAD(P)-dependent epimerase/dehydratase family. UDP-glucuronic acid decarboxylase subfamily. As to quaternary structure, homohexamer, formed by a dimer of trimers.

It catalyses the reaction UDP-alpha-D-glucuronate + NAD(+) = UDP-beta-L-threo-pentopyranos-4-ulose + CO2 + NADH. It carries out the reaction UDP-4-amino-4-deoxy-beta-L-arabinose + (6R)-10-formyltetrahydrofolate = UDP-4-deoxy-4-formamido-beta-L-arabinose + (6S)-5,6,7,8-tetrahydrofolate + H(+). It functions in the pathway nucleotide-sugar biosynthesis; UDP-4-deoxy-4-formamido-beta-L-arabinose biosynthesis; UDP-4-deoxy-4-formamido-beta-L-arabinose from UDP-alpha-D-glucuronate: step 1/3. Its pathway is nucleotide-sugar biosynthesis; UDP-4-deoxy-4-formamido-beta-L-arabinose biosynthesis; UDP-4-deoxy-4-formamido-beta-L-arabinose from UDP-alpha-D-glucuronate: step 3/3. The protein operates within bacterial outer membrane biogenesis; lipopolysaccharide biosynthesis. Bifunctional enzyme that catalyzes the oxidative decarboxylation of UDP-glucuronic acid (UDP-GlcUA) to UDP-4-keto-arabinose (UDP-Ara4O) and the addition of a formyl group to UDP-4-amino-4-deoxy-L-arabinose (UDP-L-Ara4N) to form UDP-L-4-formamido-arabinose (UDP-L-Ara4FN). The modified arabinose is attached to lipid A and is required for resistance to polymyxin and cationic antimicrobial peptides. This chain is Bifunctional polymyxin resistance protein ArnA, found in Enterobacter sp. (strain 638).